The following is a 442-amino-acid chain: MAPLNSQAAGEEESNYQCRFPRFMHLSWKRPYLTRVFDLAVIQKKQKKEMSDSEEKKCNDDSKQPVLVLDLLRSILERLSFVDFHRGRCISLEWYSASESCLAVKNPTSPWIILFPSENVESKNDSCKLYNPRDHSSYIVRDLGFDLARSRCLASSGSWFLMLDHRTDFHILNLFTRVRIPLPPLESTGDGNVFKRVYENVSDGSCIKIDNAVLWVDEKRRDYLVVWNISRLFGYHKKGDENYSWKVFKPLKKNDCCIDMAFKENKLYVLSVTRKVTVYDFSGGDSPVKCATFPSLRFRNGYSYNTQGCHYKVAVTLSGEVLIIVAKVEPYPRVECFFAVYKMDHNSSGYERISLGGEALLLDLGITVEANCMKNCIYFSNDQFHRYNGKSLCDDSNKNGICVYHIRSRYVVQVFEHLTASSKIAFKDARSFFPIFGGKWLL.

The 48-residue stretch at 62 to 109 folds into the F-box domain; that stretch reads SKQPVLVLDLLRSILERLSFVDFHRGRCISLEWYSASESCLAVKNPTS. A Nuclear localization signal motif is present at residues 236–243; it reads HKKGDENY.

Interacts with ASK7/BIN2/SK21.

Its subcellular location is the cytoplasm. It localises to the nucleus. The protein resides in the nucleolus. Its function is as follows. Component of SCF(ASK-cullin-F-box) E3 ubiquitin ligase complexes, which may mediate the ubiquitination and subsequent proteasomal degradation of target proteins. Required for brassinosteroid (BR) signal transduction. Mediates ASK7/BIN2/SK21 inactivation both by competing with substrate binding (e.g. BZR1) and by promoting its ubiquitination and subsequent proteasomal degradation. This Arabidopsis thaliana (Mouse-ear cress) protein is F-box protein KIB2.